The following is a 666-amino-acid chain: 1-deoxy-D-xylulose-5-phosphate synthase (666 aa).

Thiamine diphosphate is bound by residues His103 and 144 to 146; that span reads AHS. Residue Asp175 coordinates Mg(2+). Residues 176-177, Asn204, Tyr314, and Glu396 each bind thiamine diphosphate; that span reads GA. Mg(2+) is bound at residue Asn204.

The protein belongs to the transketolase family. DXPS subfamily. In terms of assembly, homodimer. Mg(2+) serves as cofactor. Thiamine diphosphate is required as a cofactor.

The enzyme catalyses D-glyceraldehyde 3-phosphate + pyruvate + H(+) = 1-deoxy-D-xylulose 5-phosphate + CO2. It participates in metabolic intermediate biosynthesis; 1-deoxy-D-xylulose 5-phosphate biosynthesis; 1-deoxy-D-xylulose 5-phosphate from D-glyceraldehyde 3-phosphate and pyruvate: step 1/1. Catalyzes the acyloin condensation reaction between C atoms 2 and 3 of pyruvate and glyceraldehyde 3-phosphate to yield 1-deoxy-D-xylulose-5-phosphate (DXP). The protein is 1-deoxy-D-xylulose-5-phosphate synthase of Nitrobacter winogradskyi (strain ATCC 25391 / DSM 10237 / CIP 104748 / NCIMB 11846 / Nb-255).